A 1494-amino-acid polypeptide reads, in one-letter code: ABC multidrug transporter atrG (1494 aa).

The span at 1–11 (MSLLGTINPNL) shows a compositional bias: polar residues. 2 disordered regions span residues 1–48 (MSLL…RTSD) and 84–105 (FSVS…TLNP). Residue Asn41 is glycosylated (N-linked (GlcNAc...) asparagine). 2 N-linked (GlcNAc...) asparagine glycosylation sites follow: Asn141 and Asn340. In terms of domain architecture, ABC transporter 1 spans 162–416 (LQVGALFRAV…FTTMGFECPE (255 aa)). 2 helical membrane-spanning segments follow: residues 527–547 (LTMS…SVFY) and 561–581 (ALLF…ILTL). An N-linked (GlcNAc...) asparagine glycan is attached at Asn622. Helical transmembrane passes span 636–656 (GPFF…SMLF), 669–689 (ALVP…FTIP), and 778–798 (GIMF…TEYI). An N-linked (GlcNAc...) asparagine glycan is attached at Asn835. Positions 852 to 1095 (FHWQDVCYDI…LASYFERNGA (244 aa)) constitute an ABC transporter 2 domain. Position 888 to 895 (888 to 895 (GVSGAGKT)) interacts with ATP. 5 helical membrane-spanning segments follow: residues 1191 to 1211 (YIYS…FSFF), 1227 to 1247 (IFML…NFVT), 1276 to 1296 (LPWN…PIGL), 1312 to 1332 (LMWL…HMMI), and 1351 to 1371 (LCLI…FWIF). N-linked (GlcNAc...) asparagine glycans are attached at residues Asn1410 and Asn1432. A helical transmembrane segment spans residues 1463 to 1483 (FGIMWAFIVFNIAAAVFIYWL).

Belongs to the ABC transporter superfamily. ABCG family. PDR (TC 3.A.1.205) subfamily.

The protein localises to the cell membrane. It carries out the reaction (R)-miconazole(in) + ATP + H2O = (R)-miconazole(out) + ADP + phosphate + H(+). Pleiotropic ABC efflux transporter involved in the basal level of azole susceptibility. Confers resistance to miconazole and clotrimazole. This is ABC multidrug transporter atrG from Aspergillus oryzae (strain ATCC 42149 / RIB 40) (Yellow koji mold).